A 30-amino-acid polypeptide reads, in one-letter code: Cycloviolacin-O4 (30 aa).

The segment at residues 1 to 30 (GIPCGESCVWIPCISSAIGCSCKNKVCYRN) is a cross-link (cyclopeptide (Gly-Asn)). 3 cysteine pairs are disulfide-bonded: Cys-4–Cys-20, Cys-8–Cys-22, and Cys-13–Cys-27.

This is a cyclic peptide. Expressed in petals, petioles, roots and runners but not in leaves (at protein level).

Its function is as follows. Probably participates in a plant defense mechanism. The sequence is that of Cycloviolacin-O4 from Viola odorata (Sweet violet).